Here is a 181-residue protein sequence, read N- to C-terminus: NADH-quinone oxidoreductase subunit I (181 aa).

4Fe-4S ferredoxin-type domains are found at residues 51–80 (TRNSNGSERCVACNLCSAVCPVNCISLKKS) and 90–119 (KSFQINLSRCIFCGLCEEACPTMAIQLTPD). The [4Fe-4S] cluster site is built by Cys60, Cys63, Cys66, Cys70, Cys99, Cys102, Cys105, and Cys109.

The protein belongs to the complex I 23 kDa subunit family. NDH-1 is composed of 13 different subunits. Subunits NuoA, H, J, K, L, M, N constitute the membrane sector of the complex. [4Fe-4S] cluster serves as cofactor.

The protein resides in the cell membrane. It catalyses the reaction a quinone + NADH + 5 H(+)(in) = a quinol + NAD(+) + 4 H(+)(out). In terms of biological role, NDH-1 shuttles electrons from NADH, via FMN and iron-sulfur (Fe-S) centers, to quinones in the respiratory chain. The immediate electron acceptor for the enzyme in this species is believed to be ubiquinone. Couples the redox reaction to proton translocation (for every two electrons transferred, four hydrogen ions are translocated across the cytoplasmic membrane), and thus conserves the redox energy in a proton gradient. The protein is NADH-quinone oxidoreductase subunit I of Buchnera aphidicola subsp. Cinara cedri (strain Cc).